The chain runs to 253 residues: 5'-nucleotidase SurE (253 aa).

The a divalent metal cation site is built by D8, D9, S39, and N95.

It belongs to the SurE nucleotidase family. The cofactor is a divalent metal cation.

It is found in the cytoplasm. The catalysed reaction is a ribonucleoside 5'-phosphate + H2O = a ribonucleoside + phosphate. Nucleotidase that shows phosphatase activity on nucleoside 5'-monophosphates. In Chloroflexus aggregans (strain MD-66 / DSM 9485), this protein is 5'-nucleotidase SurE.